Consider the following 2235-residue polypeptide: Bridge-like lipid transfer protein family member 2 (2235 aa).

A signal peptide spans 1-31 (MPLFFSALLVLLLVALSALFLGRWLVVRLAT). A transmembrane domain region spans residues 29-108 (LATKWCQRKL…LQKVSDLSAP (80 aa)). Ser563 carries the phosphoserine modification. N-linked (GlcNAc...) asparagine glycosylation is present at Asn730. Positions 1495–1529 (PQMPAKKPKRGVPTSASAPPRVNTPSFSGQPDKGS) are disordered. Residues 1813 to 1885 (SILHLQEAVR…LNILIRCFKD (73 aa)) adopt a coiled-coil conformation. Phosphoserine occurs at positions 1846, 2090, and 2094. Residues 2074-2099 (GKGVAQGLTRSSGVRRSFRKSPEHPV) are disordered.

Belongs to the SABRE family. In terms of tissue distribution, expressed in pancreas, placenta and up-regulated in breast carcinoma epithelial cells, ductal in situ carcinoma (DCIS), invasive breast carcinoma (IBC) and metastatic breast carcinoma cells (MET).

Its subcellular location is the cell membrane. It localises to the endoplasmic reticulum membrane. The protein localises to the mitochondrion membrane. In terms of biological role, tube-forming lipid transport protein which binds to phosphatidylinositols and affects phosphatidylinositol-4,5-bisphosphate (PtdIns-4,5-P2) distribution. This is Bridge-like lipid transfer protein family member 2 from Homo sapiens (Human).